The sequence spans 529 residues: CTP synthase (529 aa).

Residues 1–270 are amidoligase domain; the sequence is MKYIVVTGGV…ADVVCSYLSL (270 aa). Serine 12 lines the CTP pocket. Serine 12 serves as a coordination point for UTP. ATP is bound by residues 13–18 and aspartate 70; that span reads GLGKGI. Aspartate 70 and glutamate 145 together coordinate Mg(2+). Residues 152–154, 191–196, and lysine 227 each bind CTP; these read DIE and KTKPTQ. UTP-binding positions include 191–196 and lysine 227; that span reads KTKPTQ. Residue 243-245 coordinates ATP; that stretch reads KDA. Positions 293 to 525 constitute a Glutamine amidotransferase type-1 domain; that stretch reads VAIVSKYGIE…VEACKKNKSS (233 aa). Glycine 349 contacts L-glutamine. Cysteine 376 functions as the Nucleophile; for glutamine hydrolysis in the catalytic mechanism. L-glutamine contacts are provided by residues 377-380, glutamate 400, and arginine 455; that span reads LGFQ. Active-site residues include histidine 498 and glutamate 500.

It belongs to the CTP synthase family. Homotetramer.

The enzyme catalyses UTP + L-glutamine + ATP + H2O = CTP + L-glutamate + ADP + phosphate + 2 H(+). It carries out the reaction L-glutamine + H2O = L-glutamate + NH4(+). The catalysed reaction is UTP + NH4(+) + ATP = CTP + ADP + phosphate + 2 H(+). Its pathway is pyrimidine metabolism; CTP biosynthesis via de novo pathway; CTP from UDP: step 2/2. With respect to regulation, allosterically activated by GTP, when glutamine is the substrate; GTP has no effect on the reaction when ammonia is the substrate. The allosteric effector GTP functions by stabilizing the protein conformation that binds the tetrahedral intermediate(s) formed during glutamine hydrolysis. Inhibited by the product CTP, via allosteric rather than competitive inhibition. Its function is as follows. Catalyzes the ATP-dependent amination of UTP to CTP with either L-glutamine or ammonia as the source of nitrogen. Regulates intracellular CTP levels through interactions with the four ribonucleotide triphosphates. The protein is CTP synthase of Methanoculleus marisnigri (strain ATCC 35101 / DSM 1498 / JR1).